Reading from the N-terminus, the 640-residue chain is uncharacterized protein (640 aa).

The disordered stretch occupies residues 594–614; sequence QCSSDHCKPGSSETLPEATNE.

This is an uncharacterized protein from Rattus norvegicus (Rat).